The chain runs to 519 residues: ATP synthase subunit alpha (519 aa).

174–181 provides a ligand contact to ATP; that stretch reads GDRQTGKT.

This sequence belongs to the ATPase alpha/beta chains family. In terms of assembly, F-type ATPases have 2 components, CF(1) - the catalytic core - and CF(0) - the membrane proton channel. CF(1) has five subunits: alpha(3), beta(3), gamma(1), delta(1), epsilon(1). CF(0) has three main subunits: a(1), b(2) and c(9-12). The alpha and beta chains form an alternating ring which encloses part of the gamma chain. CF(1) is attached to CF(0) by a central stalk formed by the gamma and epsilon chains, while a peripheral stalk is formed by the delta and b chains.

It is found in the cell inner membrane. It carries out the reaction ATP + H2O + 4 H(+)(in) = ADP + phosphate + 5 H(+)(out). In terms of biological role, produces ATP from ADP in the presence of a proton gradient across the membrane. The alpha chain is a regulatory subunit. The protein is ATP synthase subunit alpha of Acidovorax ebreus (strain TPSY) (Diaphorobacter sp. (strain TPSY)).